The chain runs to 185 residues: MIAMNNKLAQPYAMAFLEFSLDAKQTLDTTIADLTQIKTILHDSVDLSKTLSNPLLSIKAKKEVIKAIFEPNISKNTLKFLLVLCDRGRSANLSSIIDNTIELAYKKASIEIAYVTTATAFSSNQQEALVEKLKSMTSTEQIKLNITVDKTLIGGFKVQIGSKVIDTSIQGQLRQLASHLGSSAI.

The protein belongs to the ATPase delta chain family. As to quaternary structure, F-type ATPases have 2 components, F(1) - the catalytic core - and F(0) - the membrane proton channel. F(1) has five subunits: alpha(3), beta(3), gamma(1), delta(1), epsilon(1). CF(0) has four main subunits: a(1), b(1), b'(1) and c(10-14). The alpha and beta chains form an alternating ring which encloses part of the gamma chain. F(1) is attached to F(0) by a central stalk formed by the gamma and epsilon chains, while a peripheral stalk is formed by the delta, b and b' chains.

It localises to the plastid. Its subcellular location is the chloroplast thylakoid membrane. Functionally, f(1)F(0) ATP synthase produces ATP from ADP in the presence of a proton or sodium gradient. F-type ATPases consist of two structural domains, F(1) containing the extramembraneous catalytic core and F(0) containing the membrane proton channel, linked together by a central stalk and a peripheral stalk. During catalysis, ATP synthesis in the catalytic domain of F(1) is coupled via a rotary mechanism of the central stalk subunits to proton translocation. In terms of biological role, this protein is part of the stalk that links CF(0) to CF(1). It either transmits conformational changes from CF(0) to CF(1) or is implicated in proton conduction. This chain is ATP synthase subunit delta, chloroplastic, found in Guillardia theta (Cryptophyte).